A 78-amino-acid chain; its full sequence is Acyl carrier protein (78 aa).

The 76-residue stretch at 2–77 folds into the Carrier domain; sequence SDIAERVKKI…DAIKFLEKNS (76 aa). The residue at position 37 (Ser37) is an O-(pantetheine 4'-phosphoryl)serine.

The protein belongs to the acyl carrier protein (ACP) family. 4'-phosphopantetheine is transferred from CoA to a specific serine of apo-ACP by AcpS. This modification is essential for activity because fatty acids are bound in thioester linkage to the sulfhydryl of the prosthetic group.

The protein resides in the cytoplasm. It functions in the pathway lipid metabolism; fatty acid biosynthesis. Its function is as follows. Carrier of the growing fatty acid chain in fatty acid biosynthesis. The polypeptide is Acyl carrier protein (Methylorubrum extorquens (strain CM4 / NCIMB 13688) (Methylobacterium extorquens)).